The sequence spans 453 residues: Major fimbrium subunit FimC (453 aa).

The first 28 residues, 1–28 (MKMKYFHHPSGLLPRLLLLLLLTMGAVA), serve as a signal peptide directing secretion. Cys-29 carries N-palmitoyl cysteine lipidation. A lipid anchor (S-diacylglycerol cysteine) is attached at Cys-29. Residues 29-56 (CTKEDNPDQPTSDEVATVKMSLDDVEMR) constitute a propeptide that is removed on maturation.

It belongs to the bacteroidetes fimbrillin superfamily. FimA/Mfa1 family. As to quaternary structure, fimbriae are composed of a major, structural subunit and the minor components FimC, FimD and FimE. Identified in a complex composed of FimC, FimD and FimE (in vitro). The complex interacts with host extracellular matrix proteins, including fibronectin and type I collagen. Interacts with host CXCR4.

The protein resides in the fimbrium. It localises to the cell outer membrane. Minor component of fimbriae. These long, filamentous pili are attached to the cell surface; they mediate biofilm formation, adhesion onto host cells and onto other bacteria that are part of the oral microbiome. They play an important role in invasion of periodontal tissues and are major virulence factors. FimC, FimD and FimE contribute to interaction with host CXCR4 and thereby down-regulate the TLR2-mediated host immune response. In Porphyromonas gingivalis (strain ATCC 33277 / DSM 20709 / CIP 103683 / JCM 12257 / NCTC 11834 / 2561), this protein is Major fimbrium subunit FimC.